The following is a 350-amino-acid chain: Histidinol-phosphate aminotransferase 1 (350 aa).

Lys210 is subject to N6-(pyridoxal phosphate)lysine.

It belongs to the class-II pyridoxal-phosphate-dependent aminotransferase family. Histidinol-phosphate aminotransferase subfamily. As to quaternary structure, homodimer. The cofactor is pyridoxal 5'-phosphate.

It carries out the reaction L-histidinol phosphate + 2-oxoglutarate = 3-(imidazol-4-yl)-2-oxopropyl phosphate + L-glutamate. The protein operates within amino-acid biosynthesis; L-histidine biosynthesis; L-histidine from 5-phospho-alpha-D-ribose 1-diphosphate: step 7/9. This is Histidinol-phosphate aminotransferase 1 from Pseudomonas fluorescens (strain Pf0-1).